The sequence spans 1761 residues: MADAAASPVGKRLLLLFADTAASASASAPAAAAASGDPGPALRTRAWRAGTVRAMSGAVPQDLAIFVEFDGCNWKQHSWVKVHAEEVIVLLLEGSLVWAPREDPVLLQGIRVSIAQWPALTFTPLVDKLGLGSVVPVEYLLDRELRFLSDANGLHLFQMGTDSQNQILLEHAALRETVNALISDQKLQEIFSRGPYSVQGHRVKIYQPEGEEGWLYGVVSHQDSITRLMEVSVTESGEIKSVDPRLIHVMLMDNSAPQSEGGTLKAVKSSKGKKKRESIEGKDGRRRKSASDSGCDPASKKLKGDRGEVDSNGSDGGEASRGPWKGGNASGEPGLDQRAKQPPSTFVPQINRNIRFATYTKENGRTLVVQDEPVGGDTPASFTPYSTATGQTPLAPEVGGAENKEAGKTLEQVGQGIVASAAVVTTASSTPNTVRISDTGLAAGTVPEKQKGSRSQASGENSRNSILASSGFGAPLPSSSQPLTFGSGRSQSNGVLATENKPLGFSFGCSSAQEAQKDTDLSKNLFFQCMSQTLPTSNYFTTVSESLADDSSSRDSFKQSLESLSSGLCKGRSVLGTDTKPGSKAGSSVDRKVPAESMPTLTPAFPRSLLNARTPENHENLFLQPPKLSREEPSNPFLAFVEKVEHSPFSSFASQASGSSSSATTVTSKVAPSWPESHSSADSASLAKKKPLFITTDSSKLVSGVLGSALTSGGPSLSAMGNGRSSSPTSSLTQPIEMPTLSSSPTEERPTVGPGQQDNPLLKTFSNVFGRHSGGFLSSPADFSQENKAPFEAVKRFSLDERSLACRQDSDSSTNSDLSDLSDSEEQLQAKTGLKGIPEHLMGKLGPNGERSAELLLGKSKGKQAPKGRPRTAPLKVGQSVLKDVSKVKKLKQSGEPFLQDGSCINVAPHLHKCRECRLERYRKFKEQEQDDSTVACRFFHFRRLIFTRKGVLRVEGFLSPQQSDPDAMNLWIPSSSLAEGIDLETSKYILANVGDQFCQLVMSEKEAMMMVEPHQKVAWKRAVRGVREMCDVCETTLFNIHWVCRKCGFGVCLDCYRLRKSRPRSETEEMGDEEVFSWLKCAKGQSHEPENLMPTQIIPGTALYNIGDMVHAARGKWGIKANCPCISRQNKSVLRPAVTNGMSQLPSINPSASSGNETTFSGGGGPAPVTTPEPDHVPKADSTDIRSEEPLKTDSSASNSNSELKAIRPPCPDTAPPSSALHWLADLATQKAKEETKEAGSLRSVLNKESHSPFGLDSFNSTAKVSPLTPKLFNSLLLGPTASNNKTEGSSLRDLLHSGPGKLPQTPLDTGIPFPPVFSTSSAGVKSKASLPNFLDHIIASVVENKKTSDASKRACNLTDTQKEVKEMVMGLNVLDPHTSHSWLCDGRLLCLHDPSNKNNWKIFRECWKQGQPVLVSGVHKKLKSELWKPEAFSQEFGDQDVDLVNCRNCAIISDVKVRDFWDGFEIICKRLRSEDGQPMVLKLKDWPPGEDFRDMMPTRFEDLMENLPLPEYTKRDGRLNLASRLPSYFVRPDLGPKMYNAYGLITAEDRRVGTTNLHLDVSDAVNVMVYVGIPIGEGAHDEEVLKTIDEGDADEVTKQRIHDGKEKPGALWHIYAAKDAEKIRELLRKVGEEQGQENPPDHDPIHDQSWYLDQTLRKRLYEEYGVQGWAIVQFLGDAVFIPAGAPHQVHNLYSCIKVAEDFVSPEHVKHCFRLTQEFRHLSNTHTNHEDKLQVKNIIYHAVKDAVGTLKAHESKLARS.

At alanine 2 the chain carries N-acetylalanine. Residues 253–346 (DNSAPQSEGG…QRAKQPPSTF (94 aa)) form a disordered region. Basic and acidic residues predominate over residues 298 to 309 (ASKKLKGDRGEV). Position 361 is an N6-acetyllysine (lysine 361). 2 disordered regions span residues 370 to 394 (QDEP…QTPL) and 438 to 496 (DTGL…NGVL). 3 stretches are compositionally biased toward polar residues: residues 380 to 392 (ASFT…TGQT), 453 to 468 (SRSQ…SILA), and 477 to 495 (PSSS…SNGV). Phosphoserine occurs at positions 492, 546, 556, and 560. The tract at residues 572 to 603 (RSVLGTDTKPGSKAGSSVDRKVPAESMPTLTP) is disordered. Threonine 614 carries the post-translational modification Phosphothreonine. Residues 714–762 (GPSLSAMGNGRSSSPTSSLTQPIEMPTLSSSPTEERPTVGPGQQDNPLL) are disordered. Residues 723–745 (GRSSSPTSSLTQPIEMPTLSSSP) show a composition bias toward polar residues. Phosphoserine occurs at positions 766, 773, 778, and 779. Lysine 788 participates in a covalent cross-link: Glycyl lysine isopeptide (Lys-Gly) (interchain with G-Cter in SUMO2). A Phosphoserine modification is found at serine 798. A disordered region spans residues 805–827 (ACRQDSDSSTNSDLSDLSDSEEQ). Residues 1031-1056 (CDVCETTLFNIHWVCRKCGFGVCLDC) form a C6-type zinc finger. Residues 1142-1161 (GMSQLPSINPSASSGNETTF) show a composition bias toward polar residues. Positions 1142–1220 (GMSQLPSINP…PCPDTAPPSS (79 aa)) are disordered. Residues 1174-1193 (EPDHVPKADSTDIRSEEPLK) are compositionally biased toward basic and acidic residues. Positions 1194–1204 (TDSSASNSNSE) are enriched in polar residues. Phosphoserine is present on residues serine 1253 and serine 1259. The short motif at 1293-1297 (LRDLL) is the LXXLL motif element. The 224-residue stretch at 1498-1721 (MPTRFEDLME…HCFRLTQEFR (224 aa)) folds into the JmjC domain. Fe cation contacts are provided by histidine 1560, aspartate 1562, and histidine 1689.

Belongs to the JHDM2 histone demethylase family. The cofactor is Fe(2+). In terms of tissue distribution, ubiquitous. Highly expressed in placenta, skeletal muscle, kidney, heart and liver.

Its subcellular location is the nucleus. It carries out the reaction N(6),N(6)-dimethyl-L-lysyl(9)-[histone H3] + 2 2-oxoglutarate + 2 O2 = L-lysyl(9)-[histone H3] + 2 formaldehyde + 2 succinate + 2 CO2. Functionally, histone demethylase that specifically demethylates 'Lys-9' of histone H3, thereby playing a central role in histone code. Demethylation of Lys residue generates formaldehyde and succinate. May have tumor suppressor activity. The protein is Lysine-specific demethylase 3B (KDM3B) of Homo sapiens (Human).